The chain runs to 116 residues: uncharacterized protein (116 aa).

This is an uncharacterized protein from Saccharolobus islandicus (Sulfolobus islandicus).